A 581-amino-acid polypeptide reads, in one-letter code: uncharacterized protein (581 aa).

At serine 28 the chain carries Phosphoserine. The next 11 membrane-spanning stretches (helical) occupy residues 61–81 (LVLI…AGSA), 100–120 (AGVL…ATFL), 125–145 (CVYL…ALVK), 187–207 (IYIL…GYIA), 214–234 (WIGW…LFTF), 340–360 (IFLF…DAWL), 382–402 (AVAI…IYGG), 426–446 (LWLM…FGIG), 458–478 (VGLG…MAYL), 486–506 (VLEA…VFTF), and 522–542 (ISIG…ILCG).

It belongs to the major facilitator superfamily.

The protein localises to the cytoplasm. It is found in the cell cortex. The protein resides in the membrane. This is an uncharacterized protein from Schizosaccharomyces pombe (strain 972 / ATCC 24843) (Fission yeast).